The sequence spans 456 residues: Tyrosine phenol-lyase (456 aa).

An N6-(pyridoxal phosphate)lysine modification is found at K257.

The protein belongs to the beta-eliminating lyase family. As to quaternary structure, homotetramer. The cofactor is pyridoxal 5'-phosphate.

The enzyme catalyses L-tyrosine + H2O = phenol + pyruvate + NH4(+). This is Tyrosine phenol-lyase (tpl) from Citrobacter freundii.